Consider the following 188-residue polypeptide: Killer cell lectin-like receptor subfamily G member 1 (188 aa).

The Cytoplasmic portion of the chain corresponds to 1–33; the sequence is MADSSIYSTLELPEAPQVQDESRWKLKAVLHRP. An ITIM motif motif is present at residues 5 to 10; it reads SIYSTL. A helical; Signal-anchor for type II membrane protein transmembrane segment spans residues 34 to 56; sequence HLSRFAMVALGLLTVILMSLLMY. Residues 57-188 are Extracellular-facing; it reads QRILCCGSKD…LQWICKKVLY (132 aa). C75 and C86 are joined by a disulfide. 2 N-linked (GlcNAc...) asparagine glycosylation sites follow: N82 and N97. The region spanning 82–184 is the C-type lectin domain; that stretch reads NGSHCYYFSM…CEVALQWICK (103 aa). Intrachain disulfides connect C103-C183 and C162-C175.

In terms of assembly, forms a monomer and homodimer; disulfide-linked. Interacts (via ITIM motif) with PTPN11 and INPP5D. Phosphorylated in response to monoclonal antibody G63 binding and antigenic stimulation. Expressed specifically on natural killer (NK) cells and activated CD8 T-cells. Not detected in spleen, thymus, lymph node, testis, brain or kidney. Not detected on mast cell lines, bone marrow-derived mast cells, or peritoneal mast cells.

Its subcellular location is the cell membrane. In terms of biological role, plays an inhibitory role on natural killer (NK) cells and T-cell functions upon binding to their non-MHC ligands. May mediate missing self recognition by binding to a highly conserved site on classical cadherins, enabling it to monitor expression of E-cadherin/CDH1, N-cadherin/CDH2 and R-cadherin/CDH4 on target cells. The protein is Killer cell lectin-like receptor subfamily G member 1 (Klrg1) of Mus musculus (Mouse).